An 89-amino-acid polypeptide reads, in one-letter code: MAKKSKIAKEQKREKLVAQYYELRKELKDKGDYEALRKLPRDSSPTRLTRRCKVTGRPRGVYRKFGMSRIALRDYAHKGQIPGVKKSSW.

This sequence belongs to the universal ribosomal protein uS14 family. In terms of assembly, part of the 30S ribosomal subunit. Contacts proteins S3 and S10.

Functionally, binds 16S rRNA, required for the assembly of 30S particles and may also be responsible for determining the conformation of the 16S rRNA at the A site. This chain is Small ribosomal subunit protein uS14A, found in Staphylococcus saprophyticus subsp. saprophyticus (strain ATCC 15305 / DSM 20229 / NCIMB 8711 / NCTC 7292 / S-41).